Reading from the N-terminus, the 424-residue chain is Riboflavin biosynthesis protein RibBA (424 aa).

Residues 1 to 206 (MVTCEAGIAS…VDDLITYRWT (206 aa)) form a DHBP synthase region. D-ribulose 5-phosphate-binding positions include 32 to 33 (RE), Asp-37, 145 to 149 (RPGHT), and Glu-169. Glu-33 is a binding site for Mg(2+). His-148 contributes to the Mg(2+) binding site. The interval 207-424 (FDSLVEHVSS…YETVERTSCC (218 aa)) is GTP cyclohydrolase II. Residue 257-261 (RVHSE) coordinates GTP. Residues Cys-262, Cys-273, and Cys-275 each contribute to the Zn(2+) site. Residues Gln-278, 301 to 303 (EGR), and Thr-323 contribute to the GTP site. Asp-335 serves as the catalytic Proton acceptor; for GTP cyclohydrolase activity. Arg-337 (nucleophile; for GTP cyclohydrolase activity) is an active-site residue. Thr-358 and Lys-363 together coordinate GTP.

In the N-terminal section; belongs to the DHBP synthase family. The protein in the C-terminal section; belongs to the GTP cyclohydrolase II family. Mg(2+) is required as a cofactor. Requires Mn(2+) as cofactor. Zn(2+) serves as cofactor.

It carries out the reaction D-ribulose 5-phosphate = (2S)-2-hydroxy-3-oxobutyl phosphate + formate + H(+). The catalysed reaction is GTP + 4 H2O = 2,5-diamino-6-hydroxy-4-(5-phosphoribosylamino)-pyrimidine + formate + 2 phosphate + 3 H(+). Its pathway is cofactor biosynthesis; riboflavin biosynthesis; 2-hydroxy-3-oxobutyl phosphate from D-ribulose 5-phosphate: step 1/1. The protein operates within cofactor biosynthesis; riboflavin biosynthesis; 5-amino-6-(D-ribitylamino)uracil from GTP: step 1/4. Its function is as follows. Catalyzes the conversion of D-ribulose 5-phosphate to formate and 3,4-dihydroxy-2-butanone 4-phosphate. Functionally, catalyzes the conversion of GTP to 2,5-diamino-6-ribosylamino-4(3H)-pyrimidinone 5'-phosphate (DARP), formate and pyrophosphate. This chain is Riboflavin biosynthesis protein RibBA, found in Chlamydia muridarum (strain MoPn / Nigg).